Reading from the N-terminus, the 212-residue chain is Ribosomal RNA small subunit methyltransferase G (212 aa).

S-adenosyl-L-methionine is bound by residues glycine 76, methionine 81, 127 to 128, and arginine 145; that span reads VE.

The protein belongs to the methyltransferase superfamily. RNA methyltransferase RsmG family.

The protein localises to the cytoplasm. It carries out the reaction guanosine(527) in 16S rRNA + S-adenosyl-L-methionine = N(7)-methylguanosine(527) in 16S rRNA + S-adenosyl-L-homocysteine. In terms of biological role, specifically methylates the N7 position of guanine in position 527 of 16S rRNA. This Acinetobacter baylyi (strain ATCC 33305 / BD413 / ADP1) protein is Ribosomal RNA small subunit methyltransferase G.